The chain runs to 619 residues: uncharacterized protein (619 aa).

Positions 1–21 (MKKLIAIIAVAAVVIAGFVFT) are cleaved as a signal peptide.

This is an uncharacterized protein from Archaeoglobus fulgidus (strain ATCC 49558 / DSM 4304 / JCM 9628 / NBRC 100126 / VC-16).